Reading from the N-terminus, the 79-residue chain is uncharacterized protein (79 aa).

A signal peptide spans Met1 to Ala24. In terms of domain architecture, LysM spans Ser32–Cys78.

It is found in the secreted. This is an uncharacterized protein from Dictyostelium discoideum (Social amoeba).